The following is a 282-amino-acid chain: Proteasome subunit beta (282 aa).

Residues 1-55 constitute a propeptide, removed in mature form; by autocatalysis; it reads MDNSSTGRYPAASLPPAYLRPGSSSFTDFLRAQAPELLPTARSFPEGSVVQAAHG. The active-site Nucleophile is Thr56.

This sequence belongs to the peptidase T1B family. In terms of assembly, the 20S proteasome core is composed of 14 alpha and 14 beta subunits that assemble into four stacked heptameric rings, resulting in a barrel-shaped structure. The two inner rings, each composed of seven catalytic beta subunits, are sandwiched by two outer rings, each composed of seven alpha subunits. The catalytic chamber with the active sites is on the inside of the barrel. Has a gated structure, the ends of the cylinder being occluded by the N-termini of the alpha-subunits. Is capped by the proteasome-associated ATPase, ARC.

It localises to the cytoplasm. It catalyses the reaction Cleavage of peptide bonds with very broad specificity.. It participates in protein degradation; proteasomal Pup-dependent pathway. Its activity is regulated as follows. The formation of the proteasomal ATPase ARC-20S proteasome complex, likely via the docking of the C-termini of ARC into the intersubunit pockets in the alpha-rings, may trigger opening of the gate for substrate entry. Interconversion between the open-gate and close-gate conformations leads to a dynamic regulation of the 20S proteasome proteolysis activity. Component of the proteasome core, a large protease complex with broad specificity involved in protein degradation. The sequence is that of Proteasome subunit beta from Actinosynnema mirum (strain ATCC 29888 / DSM 43827 / JCM 3225 / NBRC 14064 / NCIMB 13271 / NRRL B-12336 / IMRU 3971 / 101).